Consider the following 374-residue polypeptide: Tetraacyldisaccharide 4'-kinase (374 aa).

66-73 (TAGGTGKT) is a binding site for ATP.

This sequence belongs to the LpxK family.

It carries out the reaction a lipid A disaccharide + ATP = a lipid IVA + ADP + H(+). The protein operates within glycolipid biosynthesis; lipid IV(A) biosynthesis; lipid IV(A) from (3R)-3-hydroxytetradecanoyl-[acyl-carrier-protein] and UDP-N-acetyl-alpha-D-glucosamine: step 6/6. Transfers the gamma-phosphate of ATP to the 4'-position of a tetraacyldisaccharide 1-phosphate intermediate (termed DS-1-P) to form tetraacyldisaccharide 1,4'-bis-phosphate (lipid IVA). This Syntrophus aciditrophicus (strain SB) protein is Tetraacyldisaccharide 4'-kinase.